The chain runs to 220 residues: Ribonuclease HII (220 aa).

The RNase H type-2 domain maps to 32–220; that stretch reads KHIAGIDEAG…FAPIKGRFDC (189 aa). Residues D38, E39, and D130 each coordinate a divalent metal cation.

This sequence belongs to the RNase HII family. Mn(2+) serves as cofactor. Requires Mg(2+) as cofactor.

It is found in the cytoplasm. It catalyses the reaction Endonucleolytic cleavage to 5'-phosphomonoester.. Functionally, endonuclease that specifically degrades the RNA of RNA-DNA hybrids. This is Ribonuclease HII from Brucella suis (strain ATCC 23445 / NCTC 10510).